A 421-amino-acid chain; its full sequence is Histidine--tRNA ligase (421 aa).

Belongs to the class-II aminoacyl-tRNA synthetase family. In terms of assembly, homodimer.

It localises to the cytoplasm. It catalyses the reaction tRNA(His) + L-histidine + ATP = L-histidyl-tRNA(His) + AMP + diphosphate + H(+). The polypeptide is Histidine--tRNA ligase (Francisella tularensis subsp. mediasiatica (strain FSC147)).